The chain runs to 122 residues: MARIAGVNIPTNKRVVIALQYIHGIGKKFAQEIVDKVGIPAERRVNQLTDAEVLQIRETIDRDYQVEGDLRREVSMNIKRLMDLGCYRGLRHRRSLPVRGQRTHTNARTRKGPAKSIAGKKK.

Residues 95-122 (SLPVRGQRTHTNARTRKGPAKSIAGKKK) are disordered.

It belongs to the universal ribosomal protein uS13 family. In terms of assembly, part of the 30S ribosomal subunit. Forms a loose heterodimer with protein S19. Forms two bridges to the 50S subunit in the 70S ribosome.

In terms of biological role, located at the top of the head of the 30S subunit, it contacts several helices of the 16S rRNA. In the 70S ribosome it contacts the 23S rRNA (bridge B1a) and protein L5 of the 50S subunit (bridge B1b), connecting the 2 subunits; these bridges are implicated in subunit movement. Contacts the tRNAs in the A and P-sites. This is Small ribosomal subunit protein uS13 from Mesorhizobium japonicum (strain LMG 29417 / CECT 9101 / MAFF 303099) (Mesorhizobium loti (strain MAFF 303099)).